The chain runs to 260 residues: Coiled-coil domain-containing protein 127 (260 aa).

Residues Glu-47 to Gln-135 are a coiled coil.

This chain is Coiled-coil domain-containing protein 127 (Ccdc127), found in Rattus norvegicus (Rat).